The sequence spans 480 residues: MGLRLTTKVQVSGWRFLLRRLEHAIVRRDTRMFDDPLQFYSRSIALGIVVAVLILAGAALLAYFKPQGKLGGTSLFTDRATNQLYVLLSGQLHPVYNLTSARLVLGNPANPATVKSSELSKLPMGQTVGIPGAPYATPVSAGSTSIWTLCDTVARADSTSPVVQTAVIAMPLEIDASIDPLQSHEAVLVSYQGETWIVTTKGRHAIDLTDRALTSSMGIPVTARPTPISEGMFNALPDMGPWQLPPIPAAGAPNSLGLPDDLVIGSVFQIHTDKGPQYYVVLPDGIAQVNATTAAALRATQAHGLVAPPAMVPSLVVRIAERVYPSPLPDEPLKIVSRPQDPALCWSWQRSAGDQSPQSTVLSGRHLPISPSAMNMGIKQIHGTATVYLDGGKFVALQSPDPRYTESMYYIDPQGVRYGVPNAETAKSLGLSSPQNAPWEIVRLLVDGPVLSKDAALLEHDTLPADPSPRKVPAGASGAP.

Residues 44 to 64 traverse the membrane as a helical segment; the sequence is IALGIVVAVLILAGAALLAYF. The disordered stretch occupies residues 461-480; the sequence is DTLPADPSPRKVPAGASGAP.

This sequence belongs to the EccB family. In terms of assembly, part of the ESX-1 / type VII secretion system (T7SS), which is composed of cytosolic and membrane components. The ESX-1 membrane complex is composed of EccB1, EccCa1, EccCb1, EccD1 and EccE1.

The protein resides in the cell inner membrane. An ATPase. Part of the ESX-1 specialized secretion system, which delivers several virulence factors to host cells during infection, including the key virulence factors EsxA (ESAT-6) and EsxB (CFP-10). This chain is ESX-1 secretion system ATPase EccB1, found in Mycobacterium tuberculosis (strain CDC 1551 / Oshkosh).